Consider the following 884-residue polypeptide: Valine--tRNA ligase (884 aa).

The 'HIGH' region motif lies at 46 to 56; that stretch reads PNVTGKLHLGH. A 'KMSKS' region motif is present at residues 520–524; the sequence is KMSKS. An ATP-binding site is contributed by K523. The stretch at 809–844 forms a coiled coil; that stretch reads LADLLNVEEELARLEKELAKWQKELNMVGKKLSNER.

Belongs to the class-I aminoacyl-tRNA synthetase family. ValS type 1 subfamily. As to quaternary structure, monomer.

The protein resides in the cytoplasm. It carries out the reaction tRNA(Val) + L-valine + ATP = L-valyl-tRNA(Val) + AMP + diphosphate. Functionally, catalyzes the attachment of valine to tRNA(Val). As ValRS can inadvertently accommodate and process structurally similar amino acids such as threonine, to avoid such errors, it has a 'posttransfer' editing activity that hydrolyzes mischarged Thr-tRNA(Val) in a tRNA-dependent manner. This is Valine--tRNA ligase from Streptococcus agalactiae serotype III (strain NEM316).